The chain runs to 162 residues: UPF0114 protein PFLU_5318 (162 aa).

The next 3 helical transmembrane spans lie at Leu-15–Phe-35, Leu-53–Val-73, and Leu-136–Leu-156.

The protein belongs to the UPF0114 family.

It localises to the cell membrane. The protein is UPF0114 protein PFLU_5318 of Pseudomonas fluorescens (strain SBW25).